Reading from the N-terminus, the 829-residue chain is Cation/H(+) antiporter 14 (829 aa).

Helical transmembrane passes span 48 to 68, 77 to 97, 117 to 137, 145 to 165, 180 to 200, 215 to 235, 240 to 260, 281 to 301, 329 to 349, 361 to 383, 392 to 412, and 425 to 445; these read YAMPLMLLQMSVIIITSRLLY, GMISAQVLAGIILGPSLFGQS, SNLGFFIHLFLLGLRIDASII, ILIGTASYALPFSLGNLTVLF, ISTVISLNAMTSFPVTTTVLA, NCSIVCEAFSWIVALVFRMFL, LASVWSFVWVTALILVIFFVC, IPFFPIIMVLLTISLTSEVLG, LEMFATSLMLPCFISISGLQT, IIEAVILITYGCKFLGTAAASAY, FSLALLMCCQGVIEIYTCVMW, and LLIITLLLVTGISRFLVVCLY. Serine 827 is modified (phosphoserine).

The protein belongs to the monovalent cation:proton antiporter 2 (CPA2) transporter (TC 2.A.37) family. CHX (TC 2.A.37.4) subfamily. Preferentially expressed in pollen but also detected in vegetative tissues like leaf trichomes and root vascular tissues.

It localises to the membrane. Functionally, may operate as a cation/H(+) antiporter. In Arabidopsis thaliana (Mouse-ear cress), this protein is Cation/H(+) antiporter 14 (CHX14).